Consider the following 3567-residue polypeptide: Erythronolide synthase EryA2 (3567 aa).

In terms of domain architecture, Ketosynthase family 3 (KS3) 1 spans 30–455 (SDPIAIVSMA…GTNAHVIVEE (426 aa)). Module regions lie at residues 33–1467 (IAIV…QHLR) and 1491–3485 (IAIV…EHLR). Cysteine 202 (acyl-thioester intermediate; for beta-ketoacyl synthase 1 activity) is an active-site residue. Residues histidine 337 and histidine 377 each act as for beta-ketoacyl synthase 1 activity in the active site. Residues 560 to 880 (VFLFPGQGSQ…MATAHVSGVD (321 aa)) are acyltransferase 1. Serine 651 acts as the Acyl-ester intermediate; for acyltransferase 1 activity in catalysis. A C2-type beta-ketoacyl reductase 1 region spans residues 1132-1297 (GTVLVTGAAS…CTSVAWTPWA (166 aa)). Tyrosine 1267 serves as the catalytic For C2-type beta-ketoacyl reductase 1 and probable racemase activity. The interval 1364 to 1385 (GRGGQAEAEPDSGPTGEPAQRL) is disordered. The Carrier 1 domain occupies 1395-1470 (ENLLELVANA…ALAQHLRARL (76 aa)). Serine 1430 is modified (O-(pantetheine 4'-phosphoryl)serine). One can recognise a Ketosynthase family 3 (KS3) 2 domain in the interval 1488–1912 (SEPIAIVGIG…GTNAHVIVEE (425 aa)). Cysteine 1661 serves as the catalytic Acyl-thioester intermediate; for beta-ketoacyl synthase 2 activity. Residues histidine 1796 and histidine 1834 each act as for beta-ketoacyl synthase 2 activity in the active site. Residues 2015–2331 (LVFPGQGAQW…NLLRAHVHGV (317 aa)) form an acyltransferase 2 region. Residue serine 2105 is the Acyl-ester intermediate; for acyltransferase 2 activity of the active site. The N-terminal hotdog fold stretch occupies residues 2377-2502 (HPLLLAAVDV…GTLAQGVAAG (126 aa)). A dehydratase region spans residues 2377 to 2645 (HPLLLAAVDV…SLVVRSTGEK (269 aa)). The PKS/mFAS DH domain maps to 2377-2648 (HPLLLAAVDV…VRSTGEKWEQ (272 aa)). The active-site Proton acceptor; for dehydratase activity is histidine 2409. Residues 2514–2648 (AVRIPLDDHY…VRSTGEKWEQ (135 aa)) form a C-terminal hotdog fold region. Residue aspartate 2571 is the Proton donor; for dehydratase activity of the active site. An enoyl reductase region spans residues 2831-3131 (GAIDSVAFEP…RGRHVGKLVL (301 aa)). Tyrosine 2874 (for enoyl reductase activity) is an active-site residue. Residues 2964-2973 (HAAAGGVGMA), 3149-3152 (TGTL), 3173-3176 (SRRG), 3202-3203 (DT), lysine 3250, and 3272-3273 (FS) contribute to the NADP(+) site. The segment at 3141–3317 (GTVLITGGTG…AKALGWGLWA (177 aa)) is beta-ketoacyl reductase 2. Tyrosine 3287 (for beta-ketoacyl reductase 2 activity) is an active-site residue. Residues 3413–3488 (AGLAELVRSH…AVAEHLRDRL (76 aa)) form the Carrier 2 domain. The residue at position 3448 (serine 3448) is an O-(pantetheine 4'-phosphoryl)serine.

Homodimer. Erythronolide synthase is composed of EryAI, EryAII and EryAIII multimodular (2 modules) polypeptides each coding for a functional synthase subunit which participates in 2 of the six FAS-like elongation steps required for formation of the polyketide. Module 1, 2, 3, 4, 5, and 6 participating in biosynthesis steps 1, 2, 3, 4, 5, and 6, respectively. Pantetheine 4'-phosphate is required as a cofactor.

The catalysed reaction is 6 (S)-methylmalonyl-CoA + propanoyl-CoA + 6 NADPH + 12 H(+) = 6-deoxyerythronolide B + 6 CO2 + 6 NADP(+) + 7 CoA + H2O. It functions in the pathway antibiotic biosynthesis; erythromycin biosynthesis. In terms of biological role, involved in the biosynthesis of antibiotic erythromycin via the biosynthesis of its aglycone precursor, 6-deoxyerythronolide B (6-dEB). The sequence is that of Erythronolide synthase EryA2 from Saccharopolyspora erythraea (Streptomyces erythraeus).